The following is a 290-amino-acid chain: Putative OX-2 membrane glycoprotein homolog (290 aa).

The N-terminal stretch at Met1–Ala17 is a signal peptide. Over His18–Val267 the chain is Extracellular. Positions Pro23–Ser135 constitute an Ig-like V-type domain. The cysteines at positions 41 and 125 are disulfide-linked. N-linked (GlcNAc...) asparagine; by host glycosylation is found at Asn71, Asn104, Asn194, and Asn202. Positions Pro146–Thr236 constitute an Ig-like C2-type domain. A helical membrane pass occupies residues Pro268 to Phe288. Over Lys289 to Ser290 the chain is Cytoplasmic.

The protein localises to the membrane. The chain is Putative OX-2 membrane glycoprotein homolog (U85) from Homo sapiens (Human).